We begin with the raw amino-acid sequence, 40 residues long: Natriuretic peptide PpNP-a (40 aa).

A propeptide spanning residues 1–8 (SGSKTANI) is cleaved from the precursor. Residues 1 to 40 (SGSKTANIGDGCFGVPIDHIGSTSGMGCGSPRPKPTPGGS) are disordered. Residues C12 and C28 are joined by a disulfide bond.

The protein belongs to the natriuretic peptide family. As to expression, expressed by the venom gland.

The protein resides in the secreted. Functionally, snake venom natriuretic peptide that targets both NPR1 and NPR2. Exhibits hypotensive and vasodepressor activities. The sequence is that of Natriuretic peptide PpNP-a from Pseudechis porphyriacus (Red-bellied black snake).